A 321-amino-acid polypeptide reads, in one-letter code: tRNA(Ile)-lysidine synthase (321 aa).

30–35 (SGGSDS) contacts ATP.

It belongs to the tRNA(Ile)-lysidine synthase family.

It is found in the cytoplasm. It carries out the reaction cytidine(34) in tRNA(Ile2) + L-lysine + ATP = lysidine(34) in tRNA(Ile2) + AMP + diphosphate + H(+). Functionally, ligates lysine onto the cytidine present at position 34 of the AUA codon-specific tRNA(Ile) that contains the anticodon CAU, in an ATP-dependent manner. Cytidine is converted to lysidine, thus changing the amino acid specificity of the tRNA from methionine to isoleucine. In Chlamydia trachomatis serovar D (strain ATCC VR-885 / DSM 19411 / UW-3/Cx), this protein is tRNA(Ile)-lysidine synthase.